The chain runs to 1131 residues: Inositol hexakisphosphate and diphosphoinositol-pentakisphosphate kinase 2 (1131 aa).

Positions 21-53 (DELLDQSKPENLDNLYEHTEDEEDEEDDEYDSP) are disordered. Over residues 25 to 38 (DQSKPENLDNLYEH) the composition is skewed to basic and acidic residues. Acidic residues predominate over residues 39–52 (TEDEEDEEDDEYDS). 67 to 68 (KK) serves as a coordination point for substrate. ATP is bound by residues arginine 148, lysine 201, histidine 208, arginine 227, 251–254 (EEFM), and 260–262 (DVK). Residue 227–228 (RK) participates in substrate binding. 2 residues coordinate substrate: lysine 262 and arginine 276. Residues serine 278, aspartate 323, and 335-337 (DVN) contribute to the ATP site. 340-343 (SFVK) serves as a coordination point for substrate. The polyphosphoinositide-binding domain stretch occupies residues 385-456 (PTTSGTKMEL…VLDIARQLLV (72 aa)). The interval 912 to 951 (KGCEEDKNLPSGFGYRPASQENESSKKHTHANDSDEDLGV) is disordered. Over residues 934-951 (ESSKKHTHANDSDEDLGV) the composition is skewed to basic and acidic residues.

This sequence belongs to the histidine acid phosphatase family. VIP1 subfamily.

It localises to the cytoplasm. The protein localises to the cytosol. It carries out the reaction 1D-myo-inositol hexakisphosphate + ATP = 1-diphospho-1D-myo-inositol 2,3,4,5,6-pentakisphosphate + ADP. The enzyme catalyses 5-diphospho-1D-myo-inositol 1,2,3,4,6-pentakisphosphate + ATP + H(+) = 1,5-bis(diphospho)-1D-myo-inositol 2,3,4,6-tetrakisphosphate + ADP. Bifunctional inositol kinase that acts in concert with the IP6K kinases IP6K1, IP6K2 and IP6K3 to synthesize the diphosphate group-containing inositol pyrophosphates diphosphoinositol pentakisphosphate, PP-InsP5, and bis-diphosphoinositol tetrakisphosphate, (PP)2-InsP4. PP-InsP5 and (PP)2-InsP4, also respectively called InsP7 and InsP8, regulate a variety of cellular processes, including apoptosis, vesicle trafficking, cytoskeletal dynamics, exocytosis, insulin signaling and neutrophil activation. Phosphorylates inositol hexakisphosphate (InsP6) at position 1 to produce PP-InsP5 which is in turn phosphorylated by IP6Ks to produce (PP)2-InsP4. Alternatively, phosphorylates PP-InsP5 at position 1, produced by IP6Ks from InsP6, to produce (PP)2-InsP4. The sequence is that of Inositol hexakisphosphate and diphosphoinositol-pentakisphosphate kinase 2 from Xenopus laevis (African clawed frog).